The primary structure comprises 361 residues: Phospho-N-acetylmuramoyl-pentapeptide-transferase (361 aa).

The next 10 helical transmembrane spans lie at 18 to 38 (VFNYLTFRSIVSALTALILVL), 73 to 93 (TMGGVLIIVAIVISVLLWGDL), 97 to 117 (FIWVILLVTVAFSAIGWMDDY), 135 to 155 (LLQSIIGALAAVYLYFSATTG), 168 to 188 (VLPNLGLFYIVLAYFVIVGSS), 196 to 216 (GLDGLALMPTVMIGAALGVFA), 235 to 255 (GAGEVVVFCSALVGAGLGFLW), 263 to 283 (VFMGDVGSLGLGAALGVTAVV), 288 to 308 (LVYFLMGGIFVAETLSVILQV), and 338 to 358 (KVIVRFWIITFILVLCGLATL).

The protein belongs to the glycosyltransferase 4 family. MraY subfamily. The cofactor is Mg(2+).

It is found in the cell inner membrane. It carries out the reaction UDP-N-acetyl-alpha-D-muramoyl-L-alanyl-gamma-D-glutamyl-meso-2,6-diaminopimeloyl-D-alanyl-D-alanine + di-trans,octa-cis-undecaprenyl phosphate = di-trans,octa-cis-undecaprenyl diphospho-N-acetyl-alpha-D-muramoyl-L-alanyl-D-glutamyl-meso-2,6-diaminopimeloyl-D-alanyl-D-alanine + UMP. The protein operates within cell wall biogenesis; peptidoglycan biosynthesis. In terms of biological role, catalyzes the initial step of the lipid cycle reactions in the biosynthesis of the cell wall peptidoglycan: transfers peptidoglycan precursor phospho-MurNAc-pentapeptide from UDP-MurNAc-pentapeptide onto the lipid carrier undecaprenyl phosphate, yielding undecaprenyl-pyrophosphoryl-MurNAc-pentapeptide, known as lipid I. The chain is Phospho-N-acetylmuramoyl-pentapeptide-transferase from Coxiella burnetii (strain CbuK_Q154) (Coxiella burnetii (strain Q154)).